The primary structure comprises 130 residues: Small ribosomal subunit protein eS8 (130 aa).

Belongs to the eukaryotic ribosomal protein eS8 family. As to quaternary structure, part of the 30S ribosomal subunit.

This chain is Small ribosomal subunit protein eS8, found in Ignicoccus hospitalis (strain KIN4/I / DSM 18386 / JCM 14125).